The primary structure comprises 746 residues: Exocyst complex component 3-like protein (746 aa).

The tract at residues 1–23 is disordered; that stretch reads MDSAAKDEMQPALSPGPEWPEQE. The mediates interaction with EXOC2, EXOC4 and EXOC5 stretch occupies residues 1–370; it reads MDSAAKDEMQ…DVSQLEPLLT (370 aa).

It belongs to the SEC6 family. As to quaternary structure, interacts with EXOC2, EXOC4 and EXOC5; may be part of the exocyst.

Its subcellular location is the cytoplasmic vesicle. It localises to the secretory vesicle. As part of the exocyst, may play a role in regulated exocytosis of insulin granules. The protein is Exocyst complex component 3-like protein (EXOC3L1) of Homo sapiens (Human).